A 329-amino-acid chain; its full sequence is Ribonucleoside-diphosphate reductase small chain (329 aa).

Residues aspartate 75, glutamate 106, and histidine 109 each contribute to the Fe cation site. The active site involves tyrosine 113. Fe cation contacts are provided by glutamate 168, glutamate 202, and histidine 205.

Belongs to the ribonucleoside diphosphate reductase small chain family. Heterodimer of a large and a small chain. The cofactor is Fe cation.

Its subcellular location is the cytoplasm. It catalyses the reaction a 2'-deoxyribonucleoside 5'-diphosphate + [thioredoxin]-disulfide + H2O = a ribonucleoside 5'-diphosphate + [thioredoxin]-dithiol. Provides the precursors necessary for DNA synthesis. Catalyzes the biosynthesis of deoxyribonucleotides from the corresponding ribonucleotides. The polypeptide is Ribonucleoside-diphosphate reductase small chain (Nicotiana tabacum (Common tobacco)).